Reading from the N-terminus, the 239-residue chain is Ribonuclease PH (239 aa).

Phosphate-binding positions include Arg-86 and 124–126 (GTR).

This sequence belongs to the RNase PH family. Homohexameric ring arranged as a trimer of dimers.

The catalysed reaction is tRNA(n+1) + phosphate = tRNA(n) + a ribonucleoside 5'-diphosphate. Phosphorolytic 3'-5' exoribonuclease that plays an important role in tRNA 3'-end maturation. Removes nucleotide residues following the 3'-CCA terminus of tRNAs; can also add nucleotides to the ends of RNA molecules by using nucleoside diphosphates as substrates, but this may not be physiologically important. Probably plays a role in initiation of 16S rRNA degradation (leading to ribosome degradation) during starvation. This chain is Ribonuclease PH, found in Cupriavidus taiwanensis (strain DSM 17343 / BCRC 17206 / CCUG 44338 / CIP 107171 / LMG 19424 / R1) (Ralstonia taiwanensis (strain LMG 19424)).